Consider the following 467-residue polypeptide: Serine/threonine-protein phosphatase 2A 56 kDa regulatory subunit epsilon isoform (467 aa).

Residues methionine 1–glutamine 39 form a disordered region. N-acetylserine is present on serine 2. Residue threonine 7 is modified to Phosphothreonine. A compositionally biased stretch (basic residues) spans lysine 20 to arginine 29. Phosphoserine occurs at positions 30, 32, and 34. A compositionally biased stretch (low complexity) spans serine 30 to glutamine 39.

This sequence belongs to the phosphatase 2A regulatory subunit B56 family. PP2A consists of a common heterodimeric core enzyme, composed of a 36 kDa catalytic subunit (subunit C) and a 65 kDa constant regulatory subunit (PR65 or subunit A), that associates with a variety of regulatory subunits. Proteins that associate with the core dimer include three families of regulatory subunits B (the R2/B/PR55/B55, R3/B''/PR72/PR130/PR59 and R5/B'/B56 families), the 48 kDa variable regulatory subunit, viral proteins, and cell signaling molecules. Interacts with SGO1. Found in a complex with at least ARL2, PPP2CB; PPP2R1A, PPP2R2A, PPP2R5E and TBCD.

It localises to the cytoplasm. The B regulatory subunit might modulate substrate selectivity and catalytic activity, and might also direct the localization of the catalytic enzyme to a particular subcellular compartment. Interacts with cyclin G in vitro. This Mus musculus (Mouse) protein is Serine/threonine-protein phosphatase 2A 56 kDa regulatory subunit epsilon isoform (Ppp2r5e).